The primary structure comprises 269 residues: Basic leucine zipper 19 (269 aa).

The region spanning D140 to L196 is the bZIP domain. A basic motif region spans residues K142–K161. The tract at residues L168–L196 is leucine-zipper.

In terms of tissue distribution, expressed in roots and shoots.

The protein resides in the nucleus. In terms of biological role, transcription regulator. The polypeptide is Basic leucine zipper 19 (BZIP19) (Oryza sativa subsp. japonica (Rice)).